We begin with the raw amino-acid sequence, 239 residues long: Probable transcriptional regulatory protein MG332 (239 aa).

The protein belongs to the TACO1 family.

The protein resides in the cytoplasm. This chain is Probable transcriptional regulatory protein MG332, found in Mycoplasma genitalium (strain ATCC 33530 / DSM 19775 / NCTC 10195 / G37) (Mycoplasmoides genitalium).